A 390-amino-acid chain; its full sequence is Succinate--CoA ligase [ADP-forming] subunit beta (390 aa).

The region spanning 9–245 is the ATP-grasp domain; it reads KELLSRYGLP…KSQENEREVK (237 aa). Residues Lys46, 53-55, Glu100, Tyr103, and Glu108 contribute to the ATP site; that span reads GRG. Asn200 and Asp214 together coordinate Mg(2+). Residues Asn265 and 322-324 each bind substrate; that span reads GIV.

The protein belongs to the succinate/malate CoA ligase beta subunit family. In terms of assembly, heterotetramer of two alpha and two beta subunits. Mg(2+) is required as a cofactor.

The catalysed reaction is succinate + ATP + CoA = succinyl-CoA + ADP + phosphate. It catalyses the reaction GTP + succinate + CoA = succinyl-CoA + GDP + phosphate. Its pathway is carbohydrate metabolism; tricarboxylic acid cycle; succinate from succinyl-CoA (ligase route): step 1/1. Functionally, succinyl-CoA synthetase functions in the citric acid cycle (TCA), coupling the hydrolysis of succinyl-CoA to the synthesis of either ATP or GTP and thus represents the only step of substrate-level phosphorylation in the TCA. The beta subunit provides nucleotide specificity of the enzyme and binds the substrate succinate, while the binding sites for coenzyme A and phosphate are found in the alpha subunit. The sequence is that of Succinate--CoA ligase [ADP-forming] subunit beta from Chromobacterium violaceum (strain ATCC 12472 / DSM 30191 / JCM 1249 / CCUG 213 / NBRC 12614 / NCIMB 9131 / NCTC 9757 / MK).